The sequence spans 842 residues: Protein translocase subunit SecA (842 aa).

Residues Q85, 103–107 (GEGKT), and D493 each bind ATP. Zn(2+) contacts are provided by C825, C827, C836, and H837.

Belongs to the SecA family. As to quaternary structure, monomer and homodimer. Part of the essential Sec protein translocation apparatus which comprises SecA, SecYEG and auxiliary proteins SecDF. Other proteins may also be involved. Zn(2+) is required as a cofactor.

Its subcellular location is the cell membrane. The protein resides in the cytoplasm. The enzyme catalyses ATP + H2O + cellular proteinSide 1 = ADP + phosphate + cellular proteinSide 2.. Functionally, part of the Sec protein translocase complex. Interacts with the SecYEG preprotein conducting channel. Has a central role in coupling the hydrolysis of ATP to the transfer of proteins into and across the cell membrane, serving as an ATP-driven molecular motor driving the stepwise translocation of polypeptide chains across the membrane. This Streptococcus equi subsp. equi (strain 4047) protein is Protein translocase subunit SecA.